The primary structure comprises 177 residues: Large ribosomal subunit protein uL6 (177 aa).

This sequence belongs to the universal ribosomal protein uL6 family. In terms of assembly, part of the 50S ribosomal subunit.

This protein binds to the 23S rRNA, and is important in its secondary structure. It is located near the subunit interface in the base of the L7/L12 stalk, and near the tRNA binding site of the peptidyltransferase center. The sequence is that of Large ribosomal subunit protein uL6 from Rhodopseudomonas palustris (strain BisB18).